The sequence spans 152 residues: Zinc finger SWIM domain-containing protein 7 (152 aa).

An SWIM-type zinc finger spans residues 76-114 (YTCLASCHYCSCPAFSFSVLRKSDSLLCKHLLAIYLSQL).

It belongs to the SWS1 family. In terms of assembly, interacts with RAD51D and XRCC3; involved in homologous recombination repair. Interacts with SWSAP1; they form a functional complex involved in homologous recombination repair and stabilize each other.

The protein localises to the nucleus. Its function is as follows. Involved in early stages of the homologous recombination repair (HRR) pathway of double-stranded DNA breaks arising during DNA replication or induced by DNA-damaging agents. Required for meiotic progression, hence for fertility. This is Zinc finger SWIM domain-containing protein 7 (Zswim7) from Mus musculus (Mouse).